The sequence spans 144 residues: Large ribosomal subunit protein uL15 (144 aa).

Residues 1 to 57 (MLLNTLSPAAGSKHAPKRLGRGVGSGLGKTGGRGHKGQKSRSGGKVRPGFEGGQMPL) form a disordered region. Positions 21–31 (RGVGSGLGKTG) are enriched in gly residues. Basic residues predominate over residues 32-44 (GRGHKGQKSRSGG).

This sequence belongs to the universal ribosomal protein uL15 family. Part of the 50S ribosomal subunit.

Binds to the 23S rRNA. In Vibrio cholerae serotype O1 (strain ATCC 39315 / El Tor Inaba N16961), this protein is Large ribosomal subunit protein uL15.